The primary structure comprises 183 residues: Calcineurin subunit B type 2 (183 aa).

Residue G2 is the site of N-myristoyl glycine attachment. EF-hand domains are found at residues 25–60 (REIK…SMNP), 64–92 (RIIS…FHPK), 94–129 (DKAD…MVGS), and 135–170 (QISS…SGCN). The Ca(2+) site is built by D107, N109, D111, and E118.

Belongs to the calcineurin regulatory subunit family. Calcineurin is composed of a catalytic subunit (A) and a regulatory subunit (B).

Its function is as follows. Regulatory subunit of calcineurin, a calcium-dependent, calmodulin stimulated protein phosphatase. Confers calcium sensitivity. This chain is Calcineurin subunit B type 2 (cnbB), found in Dictyostelium discoideum (Social amoeba).